Reading from the N-terminus, the 515-residue chain is Hyccin (515 aa).

Residues 358–378 show a composition bias toward low complexity; the sequence is STSQSALSNSSNTSSKNLLGK. Disordered regions lie at residues 358 to 410 and 491 to 515; these read STSQ…TQRA and TDLP…LSTD. Positions 389–403 are enriched in basic and acidic residues; it reads AGREKEGETCREHLS. Polar residues predominate over residues 498-515; that stretch reads KQPNQQRPPSISITLSTD.

Belongs to the Hyccin family. As to quaternary structure, component of a phosphatidylinositol 4-kinase (PI4K) complex.

The protein resides in the cytoplasm. It is found in the cytosol. The protein localises to the cell membrane. Functionally, component of a complex required to localize phosphatidylinositol 4-kinase (PI4K) to the plasma membrane. The complex acts as a regulator of phosphatidylinositol 4-phosphate (PtdIns(4)P) synthesis. The protein is Hyccin (HYCC1) of Gallus gallus (Chicken).